A 437-amino-acid polypeptide reads, in one-letter code: GTPase Der (437 aa).

2 EngA-type G domains span residues 4-168 (NIVA…PEKP) and 178-353 (PRFA…ENRK). GTP is bound by residues 10 to 17 (GRPNVGKS), 57 to 61 (DTGGY), 120 to 123 (NKVD), 184 to 191 (GRPNAGKS), 231 to 235 (DTAGI), and 296 to 299 (NKWD). The 84-residue stretch at 354 to 437 (QRISTSKFNE…VPIDIYIREK (84 aa)) folds into the KH-like domain.

The protein belongs to the TRAFAC class TrmE-Era-EngA-EngB-Septin-like GTPase superfamily. EngA (Der) GTPase family. As to quaternary structure, associates with the 50S ribosomal subunit.

Functionally, GTPase that plays an essential role in the late steps of ribosome biogenesis. This Flavobacterium johnsoniae (strain ATCC 17061 / DSM 2064 / JCM 8514 / BCRC 14874 / CCUG 350202 / NBRC 14942 / NCIMB 11054 / UW101) (Cytophaga johnsonae) protein is GTPase Der.